A 507-amino-acid polypeptide reads, in one-letter code: DNA nucleotidylexotransferase (507 aa).

The short motif at 11–17 (PLRKKAK) is the Nuclear localization signal element. The 98-residue stretch at 27-124 (QHNVKFKEIV…RPVEIQNRHL (98 aa)) folds into the BRCT domain. Residues 254–258 (VGLKT) are involved in DNA binding. Residues 329–334 (GFRRGK) and 338–341 (HDVD) each bind a 2'-deoxyribonucleoside 5'-triphosphate. 3 residues coordinate Mg(2+): Asp-339, Asp-341, and Asp-431. 446–447 (GW) contributes to the a 2'-deoxyribonucleoside 5'-triphosphate binding site.

The protein belongs to the DNA polymerase type-X family. Mg(2+) serves as cofactor. As to expression, found in the thymus and not in the spleen, kidney, intestine, or liver.

It localises to the nucleus. The catalysed reaction is DNA(n) + a 2'-deoxyribonucleoside 5'-triphosphate = DNA(n+1) + diphosphate. Its function is as follows. Template-independent DNA polymerase which catalyzes the random addition of deoxynucleoside 5'-triphosphate to the 3'-end of a DNA initiator. One of the in vivo functions of this enzyme is the addition of nucleotides at the junction (N region) of rearranged Ig heavy chain and T-cell receptor gene segments during the maturation of B- and T-cells. In Xenopus laevis (African clawed frog), this protein is DNA nucleotidylexotransferase (dntt).